Consider the following 450-residue polypeptide: Glucose-6-phosphate isomerase (450 aa).

E290 (proton donor) is an active-site residue. Active-site residues include H311 and K425.

Belongs to the GPI family.

Its subcellular location is the cytoplasm. The catalysed reaction is alpha-D-glucose 6-phosphate = beta-D-fructose 6-phosphate. It functions in the pathway carbohydrate biosynthesis; gluconeogenesis. Its pathway is carbohydrate degradation; glycolysis; D-glyceraldehyde 3-phosphate and glycerone phosphate from D-glucose: step 2/4. Functionally, catalyzes the reversible isomerization of glucose-6-phosphate to fructose-6-phosphate. The sequence is that of Glucose-6-phosphate isomerase from Lactiplantibacillus plantarum (strain ATCC BAA-793 / NCIMB 8826 / WCFS1) (Lactobacillus plantarum).